Reading from the N-terminus, the 34-residue chain is Protamine-Z1/Z2 (34 aa).

The segment at 1–34 (PRRRRRSSRPVRRRRRYRRSTAARRRRRVVRRRR) is disordered.

As to expression, testis.

It is found in the nucleus. The protein resides in the chromosome. Functionally, protamines substitute for histones in the chromatin of sperm during the haploid phase of spermatogenesis. They compact sperm DNA into a highly condensed, stable and inactive complex. The chain is Protamine-Z1/Z2 from Sarda orientalis (Striped bonito).